Here is a 1576-residue protein sequence, read N- to C-terminus: DExH-box ATP-dependent RNA helicase DExH2 (1576 aa).

The 64-residue stretch at 15–78 (EATGAWATKV…ERRLSLFKGD (64 aa)) folds into the R3H domain. The Helicase ATP-binding domain maps to 227-396 (ISAVESNQVV…FGGCPVVRVP (170 aa)). Residue 240–247 (GETGCGKT) coordinates ATP. A DEIH box motif is present at residues 343–346 (DEIH). The region spanning 561 to 735 (LIVKLMKKIC…ELCLQVKMLD (175 aa)) is the Helicase C-terminal domain. 3 disordered regions span residues 1137-1165 (ATSPRDDIPSTNPNELREHDPNTTPMGSK), 1177-1223 (MEES…SLNN), and 1260-1576 (DMGN…PSDQ). The span at 1281–1301 (PNSANSMDLGNMEENTPSDLA) shows a compositional bias: polar residues. Positions 1305 to 1319 (KKKEPKSVSKLDLGS) are enriched in basic and acidic residues. The short motif at 1349 to 1360 (KQPEKKRSRSKK) is the PH1 element. The segment covering 1352-1363 (EKKRSRSKKRKS) has biased composition (basic residues). Residues 1381–1412 (ANENEQTEPKSANNLDLGNMKENTPSDLANEN) are compositionally biased toward polar residues. Residues 1454-1465 (KQPKKKRSRSKK) carry the PH2 motif. Residues 1455 to 1467 (QPKKKRSRSKKCK) show a composition bias toward basic residues. Positions 1490-1508 (EQKDPESVNRLDPGKEKES) are enriched in basic and acidic residues. Residues 1509-1524 (IPSNLVSGNEQPDSNT) are compositionally biased toward polar residues. Residues 1528–1537 (KKPKKKKRKL) show a composition bias toward basic residues. Positions 1530-1537 (PKKKKRKL) match the Nuclear localization signal motif. Residues 1540–1562 (NFDSVNNMEEKMPSTNVLSQGNK) are compositionally biased toward polar residues.

The protein belongs to the DExH box helicase family. As to quaternary structure, homodimer.

The protein resides in the nucleus. It catalyses the reaction ATP + H2O = ADP + phosphate + H(+). Functionally, may function as an ATP-dependent RNA/DNA helicase. Binds DNA in vitro in a non-specific manner. This is DExH-box ATP-dependent RNA helicase DExH2 from Arabidopsis thaliana (Mouse-ear cress).